Reading from the N-terminus, the 417-residue chain is XO lethal protein 1 (417 aa).

Residues 373–417 (VSPGETSSEGISDEHHYEEYDEDDIMEEEEAPSARQDDTYDEDEE) form a disordered region. The span at 391–403 (EYDEDDIMEEEEA) shows a compositional bias: acidic residues.

The protein belongs to the GHMP kinase family. Xol-1 subfamily.

It is found in the nucleus. Its function is as follows. Sex-determining factor that is required for sexual differentiation and X chromosome dosage compensation to promote male development. High expression during gastrulation triggers male development, while low expression at that time triggers hermaphrodite development. Although related to GHMP kinase, its mode of action remains unclear. This chain is XO lethal protein 1, found in Caenorhabditis elegans.